The sequence spans 310 residues: Glutaminase (310 aa).

Substrate is bound by residues Ser66, Asn117, Glu161, Asn168, Tyr192, Tyr244, and Val262.

This sequence belongs to the glutaminase family. Homotetramer.

It carries out the reaction L-glutamine + H2O = L-glutamate + NH4(+). The chain is Glutaminase from Shigella boydii serotype 4 (strain Sb227).